The chain runs to 30 residues: Cyclotide mech-1 (30 aa).

The segment at residues 1 to 30 is a cross-link (cyclopeptide (Gly-Asp)); it reads GVIPCGESCVFIPCINKKKCSCKNKVCYRD. Disulfide bonds link Cys5-Cys20, Cys9-Cys22, and Cys14-Cys27.

In terms of processing, this is a cyclic peptide. Post-translationally, contains 3 disulfide bonds.

Probably participates in a plant defense mechanism (Potential). Binds to and induces leakage in phospholipd membranes, particularly ones containing 1-palmitoyl-2-oleophosphatidylethanolamine (POPE). Not active against Gram-negative bacterium E.coli ATCC 25922 or Gram-positive bacterium S.aureus ATCC 25923 up to a concentration of 64 uM. The polypeptide is Cyclotide mech-1 (Melicytus chathamicus (Chatham Island mahoe)).